A 545-amino-acid chain; its full sequence is Probable protein kinase UbiB (545 aa).

One can recognise a Protein kinase domain in the interval 123–501 (DFEPIALASA…QIKQRQSQYL (379 aa)). Residues 129–137 (LASASIAQV) and Lys152 each bind ATP. Asp287 acts as the Proton acceptor in catalysis. Residues 508–528 (LFLCGSLFLLSGLANIPWLFI) traverse the membrane as a helical segment.

The protein belongs to the ABC1 family. UbiB subfamily.

It localises to the cell inner membrane. It functions in the pathway cofactor biosynthesis; ubiquinone biosynthesis [regulation]. In terms of biological role, is probably a protein kinase regulator of UbiI activity which is involved in aerobic coenzyme Q (ubiquinone) biosynthesis. The chain is Probable protein kinase UbiB from Photorhabdus laumondii subsp. laumondii (strain DSM 15139 / CIP 105565 / TT01) (Photorhabdus luminescens subsp. laumondii).